Reading from the N-terminus, the 337-residue chain is Glycerol-3-phosphate dehydrogenase [NAD(P)+] (337 aa).

NADPH contacts are provided by S11, W12, R32, and K109. Sn-glycerol 3-phosphate is bound by residues K109, G140, and S142. A144 is a binding site for NADPH. Residues K195, D248, S258, R259, and N260 each coordinate sn-glycerol 3-phosphate. Residue K195 is the Proton acceptor of the active site. NADPH is bound at residue R259. NADPH is bound by residues V283 and E285.

The protein belongs to the NAD-dependent glycerol-3-phosphate dehydrogenase family.

It localises to the cytoplasm. The catalysed reaction is sn-glycerol 3-phosphate + NAD(+) = dihydroxyacetone phosphate + NADH + H(+). It catalyses the reaction sn-glycerol 3-phosphate + NADP(+) = dihydroxyacetone phosphate + NADPH + H(+). Its pathway is membrane lipid metabolism; glycerophospholipid metabolism. Functionally, catalyzes the reduction of the glycolytic intermediate dihydroxyacetone phosphate (DHAP) to sn-glycerol 3-phosphate (G3P), the key precursor for phospholipid synthesis. This chain is Glycerol-3-phosphate dehydrogenase [NAD(P)+], found in Limosilactobacillus fermentum (strain NBRC 3956 / LMG 18251) (Lactobacillus fermentum).